A 782-amino-acid polypeptide reads, in one-letter code: Small RNA degrading nuclease 3 (782 aa).

The 152-residue stretch at 145–296 folds into the Exonuclease domain; it reads MLSIDCEMVT…HDAAAAMKLV (152 aa). One can recognise an RRM 1 domain in the interval 331–410; the sequence is AQLFLHKIPH…KKAVLKLSSG (80 aa). Residues 426–464 are disordered; that stretch reads PCEISTSERARAEENNVSSKRQKTEDETEETKEATVNQR. One can recognise an RRM 2 domain in the interval 469 to 549; it reads TKLFLHKIPH…KMVVFKLSSG (81 aa). The tract at residues 563–605 is disordered; that stretch reads DSPGEISTTKRARTEESNMSSKRQKTEDESEETKEANAKQREA. Residues 577–605 are a coiled coil; the sequence is EESNMSSKRQKTEDESEETKEANAKQREA. The segment covering 595 to 605 has biased composition (basic and acidic residues); it reads TKEANAKQREA. One can recognise an RRM 3 domain in the interval 608-688; sequence TKLLLHKIPL…KMVAFKLSSG (81 aa). The stretch at 709–779 forms a coiled coil; sequence ANANHCEDDH…KMKLEKKQSK (71 aa).

It belongs to the REXO1/REXO3 family. In terms of assembly, associated with the Mediator complex.

It localises to the nucleus. 3'-5' exonuclease degrading single-stranded small RNAs. This Arabidopsis thaliana (Mouse-ear cress) protein is Small RNA degrading nuclease 3 (SDN3).